Consider the following 214-residue polypeptide: Putative ras-related protein Rab-5B (214 aa).

Position 56-63 (56-63 (GEMNTGKT)) interacts with GTP. The Effector region motif lies at 77 to 85 (TDSTIGAAF). Residues 103-107 (DTAGQ) and 161-164 (NKVD) each bind GTP.

This sequence belongs to the small GTPase superfamily. Rab family. This sequence lacks the C-terminal cysteine motifs subject to isoprenylation in other Rab proteins.

This chain is Putative ras-related protein Rab-5B (rab5B), found in Dictyostelium discoideum (Social amoeba).